The primary structure comprises 435 residues: Glutamyl-tRNA reductase (435 aa).

Residues 49 to 52 (TCNR), S109, 114 to 116 (EGQ), and Q120 each bind substrate. C50 serves as the catalytic Nucleophile. An NADP(+)-binding site is contributed by 198 to 203 (GAGRMS).

Belongs to the glutamyl-tRNA reductase family. In terms of assembly, homodimer.

It catalyses the reaction (S)-4-amino-5-oxopentanoate + tRNA(Glu) + NADP(+) = L-glutamyl-tRNA(Glu) + NADPH + H(+). It participates in porphyrin-containing compound metabolism; protoporphyrin-IX biosynthesis; 5-aminolevulinate from L-glutamyl-tRNA(Glu): step 1/2. Its pathway is porphyrin-containing compound metabolism; chlorophyll biosynthesis. Its function is as follows. Catalyzes the NADPH-dependent reduction of glutamyl-tRNA(Glu) to glutamate 1-semialdehyde (GSA). The polypeptide is Glutamyl-tRNA reductase (Prochlorococcus marinus (strain MIT 9211)).